The primary structure comprises 843 residues: MSLISAVEDRDIHNIGKTSGGGSRTSSITSSKKSLKHGSKSLRKPKVYQTTGELLSREALYKAKLKYGVYQSPAQSYSIGVSDAHAASDKAANLAHDNQTTVEAYKRMFIDPNATKAASKMGPKVVRNNSITSATSKTSXESQTKRKSKESPGAAASKAYSMTMETTSLSSQTNSRSYSITSASSVLSGASGSFNSTVNPKPKTLNLEKVLVGAEKKAESRIKERWEPEKTNFQYGVKTDEHGNLNQFSFSNEMMNNIMAKVDAPKAQDLQKVKKVSAEKEAKSMKFALGAANAVKDMHPGEDIDKSIALKAQKRETYLSQLTSQQVLTLARANVDRQLDIIEKSDMHRKLFTNMEYNKAAVAVAQSNHQKKTEFHNKINMGGGLFLSPEDITKIASGLISPVLGEVSERAEAQRAMDEEIAERTEAYNKSLNEWETMERSIISNDAKVLTTTANRHQTEKKTSQEKIKASFDALVARMDTKVAERETLLEDTKSKEIEFKKQMQQELKDEKARLDQDLEEWGKKCEQDITEARKEQEELLKPYHDDLANAEAEHKTLVEERDXINAEISRLQDAIVDHKRKISGYGNDLDAQKNRNIREDDKLLELGQTKESLESHLNDDVIILANKAKEQAELSTKEARLKQLEVDSLINERKSELNATXIELKKEKLXLLEAMKDVASARGDDKIDEEKVKKLIGMTSEEYLTQNKSVEKNVEDLPTQLEXIEEGDELKKEEIVGAETKNSGGDGVPVSTAAKEATETSSAVQTKEPEEKISIGNKSSGKEDANDCKSAEHSKEISVSQKAGNNKSLGVSPDSLEHTFSGFSQGSSIEDDQDAISNQEKK.

Ser2 is modified (N-acetylserine). Ser2 is subject to Phosphoserine. Residues 13 to 44 (HNIGKTSGGGSRTSSITSSKKSLKHGSKSLRK) are disordered. Over residues 33–44 (KSLKHGSKSLRK) the composition is skewed to basic residues. A phosphoserine mark is found at Ser88 and Ser130. Residues 120–176 (KMGPKVVRNNSITSATSKTSXESQTKRKSKESPGAAASKAYSMTMETTSLSSQTNSR) are disordered. Composition is skewed to polar residues over residues 127-142 (RNNSITSATSKTSXES) and 163-176 (TMETTSLSSQTNSR). Phosphoserine is present on residues Ser182, Ser401, Ser584, and Ser710. Positions 708–843 (NKSVEKNVED…QDAISNQEKK (136 aa)) are disordered. Thr720 carries the phosphothreonine modification. The segment covering 752–764 (STAAKEATETSSA) has biased composition (low complexity). Phosphoserine occurs at positions 763 and 775. Residues 781-797 (SGKEDANDCKSAEHSKE) are compositionally biased toward basic and acidic residues. Polar residues predominate over residues 798 to 810 (ISVSQKAGNNKSL). Phosphoserine is present on residues Ser816, Ser828, Ser829, and Ser838.

The protein belongs to the EIS1 family.

Its subcellular location is the cytoplasmic granule. It localises to the cell membrane. Its function is as follows. Required for normal formation of eisosomes, large cytoplasmic protein assemblies that localize to specialized domains on plasma membrane and mark the site of endocytosis. The sequence is that of Eisosome protein 1 (EIS1) from Saccharomyces cerevisiae (strain VIN 13) (Baker's yeast).